The chain runs to 367 residues: Phospho-N-acetylmuramoyl-pentapeptide-transferase (367 aa).

The next 10 helical transmembrane spans lie at 34–54, 78–98, 101–121, 135–155, 175–195, 206–226, 246–266, 270–290, 295–315, and 344–364; these read GAVVTGALFVFLFGPWIIDHL, TPTMGGLMILSGLTVGTVLWA, LNPYVWIVLAVTLGFGFVGFY, FGSKLRLLIEAAIALVACYAL, TVLHFGWFFVVFGAFVIVGAG, GLAIVPVMIATASFAMIAYLA, LAVLCGALLGAGLGFLWFNAP, IFMGDTGSLALGGMLGAIAVA, IVLAVIGGLFVLEAVSVIVQV, and QIVIRFWIISVMLALAGLSTL.

Belongs to the glycosyltransferase 4 family. MraY subfamily. Mg(2+) serves as cofactor.

The protein localises to the cell inner membrane. The catalysed reaction is UDP-N-acetyl-alpha-D-muramoyl-L-alanyl-gamma-D-glutamyl-meso-2,6-diaminopimeloyl-D-alanyl-D-alanine + di-trans,octa-cis-undecaprenyl phosphate = di-trans,octa-cis-undecaprenyl diphospho-N-acetyl-alpha-D-muramoyl-L-alanyl-D-glutamyl-meso-2,6-diaminopimeloyl-D-alanyl-D-alanine + UMP. It functions in the pathway cell wall biogenesis; peptidoglycan biosynthesis. Functionally, catalyzes the initial step of the lipid cycle reactions in the biosynthesis of the cell wall peptidoglycan: transfers peptidoglycan precursor phospho-MurNAc-pentapeptide from UDP-MurNAc-pentapeptide onto the lipid carrier undecaprenyl phosphate, yielding undecaprenyl-pyrophosphoryl-MurNAc-pentapeptide, known as lipid I. The sequence is that of Phospho-N-acetylmuramoyl-pentapeptide-transferase from Bradyrhizobium diazoefficiens (strain JCM 10833 / BCRC 13528 / IAM 13628 / NBRC 14792 / USDA 110).